The following is a 500-amino-acid chain: NAD(P)H-quinone oxidoreductase chain 4, chloroplastic (500 aa).

14 helical membrane-spanning segments follow: residues 4–24 (FPWLTIIIVLPIFAGFLILFL), 37–57 (LCICIIELLLTTYAFGYHFQL), 84–104 (GISIGPILLTGFITTLATLAA), 111–129 (SRVFHFLMLAMYSGQIGPF), 134–154 (LLLFFIMWELELIPVYLLLSM), 167–187 (FILYTAGSSAFLLVGILGICL), 208–228 (ALEMLFYIGFFIAFAVKSPII), 242–262 (HYSTCMLLAGILLKMGAYGLV), 272–292 (AHSIFSPWLMIVGTIQIIYAA), 305–325 (IAYSSVSHMGFIIIGLGSIND), 330–350 (GAILQIISHGFIGAALFFLAG), 386–406 (LALPGMSGFVAELILFFGILT), 416–436 (ILITFVMAIGMILTPIYSLSM), and 462–482 (FFVSISILLPVIAIGIYPDFV).

The protein belongs to the complex I subunit 4 family.

It localises to the plastid. It is found in the chloroplast thylakoid membrane. It catalyses the reaction a plastoquinone + NADH + (n+1) H(+)(in) = a plastoquinol + NAD(+) + n H(+)(out). The enzyme catalyses a plastoquinone + NADPH + (n+1) H(+)(in) = a plastoquinol + NADP(+) + n H(+)(out). The polypeptide is NAD(P)H-quinone oxidoreductase chain 4, chloroplastic (Morus indica (Mulberry)).